The primary structure comprises 242 residues: Tryptophan synthase alpha chain (242 aa).

Active-site proton acceptor residues include E31 and D42.

Belongs to the TrpA family. Tetramer of two alpha and two beta chains.

It catalyses the reaction (1S,2R)-1-C-(indol-3-yl)glycerol 3-phosphate + L-serine = D-glyceraldehyde 3-phosphate + L-tryptophan + H2O. It participates in amino-acid biosynthesis; L-tryptophan biosynthesis; L-tryptophan from chorismate: step 5/5. In terms of biological role, the alpha subunit is responsible for the aldol cleavage of indoleglycerol phosphate to indole and glyceraldehyde 3-phosphate. The polypeptide is Tryptophan synthase alpha chain (Staphylococcus aureus (strain USA300)).